A 467-amino-acid chain; its full sequence is Argininosuccinate lyase (467 aa).

This sequence belongs to the lyase 1 family. Argininosuccinate lyase subfamily.

Its subcellular location is the cytoplasm. It catalyses the reaction 2-(N(omega)-L-arginino)succinate = fumarate + L-arginine. It participates in amino-acid biosynthesis; L-arginine biosynthesis; L-arginine from L-ornithine and carbamoyl phosphate: step 3/3. This chain is Argininosuccinate lyase, found in Anaeromyxobacter dehalogenans (strain 2CP-C).